Consider the following 314-residue polypeptide: 4-hydroxy-3-methylbut-2-enyl diphosphate reductase (314 aa).

A [4Fe-4S] cluster-binding site is contributed by Cys-12. The (2E)-4-hydroxy-3-methylbut-2-enyl diphosphate site is built by His-41 and His-74. Dimethylallyl diphosphate contacts are provided by His-41 and His-74. Isopentenyl diphosphate is bound by residues His-41 and His-74. Cys-96 contacts [4Fe-4S] cluster. His-124 is a (2E)-4-hydroxy-3-methylbut-2-enyl diphosphate binding site. Residue His-124 coordinates dimethylallyl diphosphate. His-124 provides a ligand contact to isopentenyl diphosphate. The Proton donor role is filled by Glu-126. Thr-168 lines the (2E)-4-hydroxy-3-methylbut-2-enyl diphosphate pocket. Cys-198 provides a ligand contact to [4Fe-4S] cluster. Residues Ser-226, Ser-227, Asn-228, and Ser-270 each coordinate (2E)-4-hydroxy-3-methylbut-2-enyl diphosphate. Dimethylallyl diphosphate-binding residues include Ser-226, Ser-227, Asn-228, and Ser-270. Isopentenyl diphosphate contacts are provided by Ser-226, Ser-227, Asn-228, and Ser-270.

It belongs to the IspH family. It depends on [4Fe-4S] cluster as a cofactor.

It carries out the reaction isopentenyl diphosphate + 2 oxidized [2Fe-2S]-[ferredoxin] + H2O = (2E)-4-hydroxy-3-methylbut-2-enyl diphosphate + 2 reduced [2Fe-2S]-[ferredoxin] + 2 H(+). It catalyses the reaction dimethylallyl diphosphate + 2 oxidized [2Fe-2S]-[ferredoxin] + H2O = (2E)-4-hydroxy-3-methylbut-2-enyl diphosphate + 2 reduced [2Fe-2S]-[ferredoxin] + 2 H(+). The protein operates within isoprenoid biosynthesis; dimethylallyl diphosphate biosynthesis; dimethylallyl diphosphate from (2E)-4-hydroxy-3-methylbutenyl diphosphate: step 1/1. It functions in the pathway isoprenoid biosynthesis; isopentenyl diphosphate biosynthesis via DXP pathway; isopentenyl diphosphate from 1-deoxy-D-xylulose 5-phosphate: step 6/6. Functionally, catalyzes the conversion of 1-hydroxy-2-methyl-2-(E)-butenyl 4-diphosphate (HMBPP) into a mixture of isopentenyl diphosphate (IPP) and dimethylallyl diphosphate (DMAPP). Acts in the terminal step of the DOXP/MEP pathway for isoprenoid precursor biosynthesis. The sequence is that of 4-hydroxy-3-methylbut-2-enyl diphosphate reductase from Pseudomonas aeruginosa (strain ATCC 15692 / DSM 22644 / CIP 104116 / JCM 14847 / LMG 12228 / 1C / PRS 101 / PAO1).